We begin with the raw amino-acid sequence, 255 residues long: BTB/POZ domain-containing protein KCTD14 (255 aa).

Residues 1–29 form a disordered region; sequence MWQGCAVERPVGRMTSQTPLPQSPRPRRP. The 98-residue stretch at 33–130 folds into the BTB domain; sequence TVVELNVGGE…LLEDMPQIFG (98 aa).

This is BTB/POZ domain-containing protein KCTD14 (KCTD14) from Homo sapiens (Human).